The sequence spans 482 residues: Nuclear transcription factor Y subunit nfya-1 (482 aa).

The tract at residues 1–160 (MNGASRGDVQ…NGSYIQYNEP (160 aa)) is disordered. Positions 72–93 (SSPNVQTQCHQPPVVRSQTHQA) are enriched in polar residues. Over residues 94 to 110 (SVSQTTPTQTTPSQYTP) the composition is skewed to low complexity. Polar residues-rich tracts occupy residues 126-135 (HVTPSQQQRI) and 144-160 (VSQS…YNEP). A Subunit association domain (SAD) motif is present at residues 306 to 329 (LVNPKQFNRIMRRREMRQQLEASG). Residues 336-361 (QKYLHESRHLHALKRKRGLDGRFDNT) constitute a DNA-binding region (NFYA/HAP2-type). Positions 344 to 414 (HLHALKRKRG…QPKGGIVNSS (71 aa)) are disordered. The segment covering 353-362 (GLDGRFDNTK) has biased composition (basic and acidic residues). The segment covering 363-375 (TAESSSMVSSTTS) has biased composition (low complexity).

This sequence belongs to the NFYA/HAP2 subunit family. In terms of assembly, forms a heterotrimeric transcription factor complex (nfya-1-NF-Y complex) composed of nfya-1, nfyb-1 and nfyc-1, which binds to 5'-CCAAT-3' box motif in the promoters of its target genes. Interacts with the nfyb-1 and nfyc-1 dimer; the interaction is required for subsequent binding to the 5'-CCAAT-3' box motif in DNA. Does not interact with either nfyb-1 or nfyc-1 in their monomeric form. Interacts with mes-3. In terms of tissue distribution, expressed in certain parts of the gonads with high expression in fertilized oocytes in the uterus and mature oocytes from the distal to the proximal arm of the gonad, but weak expression in the syncytial ovaries and immature oocytes at the beginning of the proximal arm of the gonad. Highly expressed in the head ganglia neurons and the developing hermaphrodite vulva and male tail. Weakly expressed in most somatic cells. Not expressed in the intestine, the hypodermis, body wall muscle surrounding the pseudocoelomic space, secretory cells in the pharyngeal terminal bulb wall, in the small ganglia surrounding the pharynx and in the neurons running anteriorly to the sensory organs in the head.

The protein localises to the nucleus. Its function is as follows. Component of the sequence-specific heterotrimeric transcription factor (nfya-1-NF-Y) which specifically recognizes a 5'-CCAAT-3' box motif found in the promoters of its target genes to regulate their expression and control cellular identity in particular tissue types. In association with the components in the nfya-1-NF-Y complex, represses the expression of the T-box transcription factor tbx-2 throughout larval development, which most likely restricts its expression to certain tissues. May act to repress txb-2 expression in conjunction with tbx-2 itself, which has an autoregulatory role. With the components in this complex, negatively regulates the expression of the homeobox protein egl-5 to spatially restrict its expression in tissues such as the head. May regulate egl-5 expression in association with the mes-2-mes-3-mes-6 complex. This is Nuclear transcription factor Y subunit nfya-1 from Caenorhabditis elegans.